The primary structure comprises 128 residues: Histone H2A type 1-H (128 aa).

A disordered region spans residues 1-22 (MSGRGKQGGKARAKAKTRSSRA). Serine 2 carries the post-translational modification N-acetylserine. Serine 2 carries the phosphoserine; by RPS6KA5 modification. Arginine 4 carries the citrulline; alternate modification. The residue at position 4 (arginine 4) is a Symmetric dimethylarginine; by PRMT5; alternate. Residues lysine 6 and lysine 10 each carry the N6-(2-hydroxyisobutyryl)lysine; alternate modification. Lysine 6 carries the N6-(beta-hydroxybutyryl)lysine; alternate modification. Positions 7–19 (QGGKARAKAKTRS) are enriched in basic residues. Residue lysine 10 is modified to N6-lactoyllysine; alternate. An N6-succinyllysine; alternate modification is found at lysine 10. Residues lysine 14 and lysine 16 each participate in a glycyl lysine isopeptide (Lys-Gly) (interchain with G-Cter in ubiquitin) cross-link. Lysine 37 carries the N6-(2-hydroxyisobutyryl)lysine; alternate modification. N6-(beta-hydroxybutyryl)lysine; alternate is present on lysine 37. Lysine 37 carries the N6-crotonyllysine; alternate modification. Residues lysine 75 and lysine 76 each carry the N6-(2-hydroxyisobutyryl)lysine modification. At lysine 96 the chain carries N6-(2-hydroxyisobutyryl)lysine; alternate. At lysine 96 the chain carries N6-succinyllysine; alternate. Residue lysine 96 is modified to N6-glutaryllysine; alternate. Position 105 is an N5-methylglutamine (glutamine 105). Lysine 119 is modified (N6-(2-hydroxyisobutyryl)lysine; alternate). N6-crotonyllysine; alternate is present on residues lysine 119 and lysine 120. N6-glutaryllysine; alternate occurs at positions 119 and 120. Lysine 120 carries the post-translational modification N6-(beta-hydroxybutyryl)lysine; alternate. Lysine 120 is covalently cross-linked (Glycyl lysine isopeptide (Lys-Gly) (interchain with G-Cter in ubiquitin); alternate). Threonine 121 carries the post-translational modification Phosphothreonine; by DCAF1. Lysine 126 carries the N6-(beta-hydroxybutyryl)lysine; alternate modification. Lysine 126 carries the post-translational modification N6-crotonyllysine; alternate. Position 126 is an N6-glutaryllysine; alternate (lysine 126).

The protein belongs to the histone H2A family. The nucleosome is a histone octamer containing two molecules each of H2A, H2B, H3 and H4 assembled in one H3-H4 heterotetramer and two H2A-H2B heterodimers. The octamer wraps approximately 147 bp of DNA. In terms of processing, deiminated on Arg-4 in granulocytes upon calcium entry. Monoubiquitination of Lys-120 (H2AK119Ub) by RING1, TRIM37 and RNF2/RING2 complex gives a specific tag for epigenetic transcriptional repression and participates in X chromosome inactivation of female mammals. It is involved in the initiation of both imprinted and random X inactivation. Ubiquitinated H2A is enriched in inactive X chromosome chromatin. Ubiquitination of H2A functions downstream of methylation of 'Lys-27' of histone H3 (H3K27me). H2AK119Ub by RNF2/RING2 can also be induced by ultraviolet and may be involved in DNA repair. Following DNA double-strand breaks (DSBs), it is ubiquitinated through 'Lys-63' linkage of ubiquitin moieties by the E2 ligase UBE2N and the E3 ligases RNF8 and RNF168, leading to the recruitment of repair proteins to sites of DNA damage. Ubiquitination at Lys-14 and Lys-16 (H2AK13Ub and H2AK15Ub, respectively) in response to DNA damage is initiated by RNF168 that mediates monoubiquitination at these 2 sites, and 'Lys-63'-linked ubiquitin are then conjugated to monoubiquitin; RNF8 is able to extend 'Lys-63'-linked ubiquitin chains in vitro. H2AK119Ub and ionizing radiation-induced 'Lys-63'-linked ubiquitination (H2AK13Ub and H2AK15Ub) are distinct events. Post-translationally, phosphorylation on Ser-2 (H2AS1ph) is enhanced during mitosis. Phosphorylation on Ser-2 by RPS6KA5/MSK1 directly represses transcription. Acetylation of H3 inhibits Ser-2 phosphorylation by RPS6KA5/MSK1. Phosphorylation at Thr-121 (H2AT120ph) by DCAF1 is present in the regulatory region of many tumor suppresor genes and down-regulates their transcription. In terms of processing, symmetric dimethylation on Arg-4 by the PRDM1/PRMT5 complex may play a crucial role in the germ-cell lineage. Glutamine methylation at Gln-105 (H2AQ104me) by FBL is specifically dedicated to polymerase I. It is present at 35S ribosomal DNA locus and impairs binding of the FACT complex. Post-translationally, crotonylation (Kcr) is specifically present in male germ cells and marks testis-specific genes in post-meiotic cells, including X-linked genes that escape sex chromosome inactivation in haploid cells. Crotonylation marks active promoters and enhancers and confers resistance to transcriptional repressors. It is also associated with post-meiotically activated genes on autosomes. In terms of processing, hydroxybutyrylation of histones is induced by starvation. Lactylated in macrophages by EP300/P300 by using lactoyl-CoA directly derived from endogenous or exogenous lactate, leading to stimulates gene transcription.

It localises to the nucleus. Its subcellular location is the chromosome. Its function is as follows. Core component of nucleosome. Nucleosomes wrap and compact DNA into chromatin, limiting DNA accessibility to the cellular machineries which require DNA as a template. Histones thereby play a central role in transcription regulation, DNA repair, DNA replication and chromosomal stability. DNA accessibility is regulated via a complex set of post-translational modifications of histones, also called histone code, and nucleosome remodeling. This is Histone H2A type 1-H from Mus musculus (Mouse).